An 88-amino-acid chain; its full sequence is YcgL domain-containing protein HI_1446 (88 aa).

Positions 1–85 constitute a YcgL domain; that stretch reads MLCAIYKSKK…QDDGLFNSLS (85 aa).

The protein is YcgL domain-containing protein HI_1446 of Haemophilus influenzae (strain ATCC 51907 / DSM 11121 / KW20 / Rd).